The following is a 483-amino-acid chain: uncharacterized protein (483 aa).

One copy of the WD repeat lies at 96–137 (IQCDQDPLSSISWSPSGELLLWSSFDSKITVWSLNTQKGYLL).

This is an uncharacterized protein from Schizosaccharomyces pombe (strain 972 / ATCC 24843) (Fission yeast).